Reading from the N-terminus, the 287-residue chain is ATP synthase gamma chain (287 aa).

This sequence belongs to the ATPase gamma chain family. As to quaternary structure, F-type ATPases have 2 components, CF(1) - the catalytic core - and CF(0) - the membrane proton channel. CF(1) has five subunits: alpha(3), beta(3), gamma(1), delta(1), epsilon(1). CF(0) has three main subunits: a, b and c.

It localises to the cell inner membrane. Functionally, produces ATP from ADP in the presence of a proton gradient across the membrane. The gamma chain is believed to be important in regulating ATPase activity and the flow of protons through the CF(0) complex. In Stenotrophomonas maltophilia (strain R551-3), this protein is ATP synthase gamma chain.